The following is a 425-amino-acid chain: Monoacylglycerol lipase ABHD2 (425 aa).

At 1-9 (MNAMLETPE) the chain is on the cytoplasmic side. Residues 10-30 (LPAVFDGVKLAAVAAVLYVIV) traverse the membrane as a helical; Signal-anchor for type II membrane protein segment. The Extracellular segment spans residues 31–425 (RCLNLKSPTA…DTEQMEAELE (395 aa)). The AB hydrolase-1 domain occupies 128 to 382 (MVICPGIANH…HGGHLGFFEG (255 aa)). N-linked (GlcNAc...) asparagine glycosylation is present at N136. The active-site Nucleophile is S207. Catalysis depends on charge relay system residues D345 and H376. N410 is a glycosylation site (N-linked (GlcNAc...) asparagine).

The protein belongs to the AB hydrolase superfamily. AB hydrolase 4 family. In terms of tissue distribution, widely expressed with higher expression in testis. Expressed by vascular smooth muscle cells, non vascular smooth muscle cells and heart.

It is found in the cell membrane. Its subcellular location is the cytoplasmic vesicle. The protein resides in the secretory vesicle. The protein localises to the acrosome membrane. The enzyme catalyses Hydrolyzes glycerol monoesters of long-chain fatty acids.. The catalysed reaction is an acetyl ester + H2O = an aliphatic alcohol + acetate + H(+). It catalyses the reaction a triacylglycerol + H2O = a diacylglycerol + a fatty acid + H(+). It carries out the reaction 2-(5Z,8Z,11Z,14Z-eicosatetraenoyl)-glycerol + H2O = glycerol + (5Z,8Z,11Z,14Z)-eicosatetraenoate + H(+). The enzyme catalyses a butanoate ester + H2O = an aliphatic alcohol + butanoate + H(+). The catalysed reaction is hexadecanoate ester + H2O = an aliphatic alcohol + hexadecanoate + H(+). Its activity is regulated as follows. Acylglycerol lipase activity is activated upon binding to progesterone. In terms of biological role, progesterone-dependent acylglycerol lipase that catalyzes hydrolysis of endocannabinoid arachidonoylglycerol (AG) from cell membrane. Acts as a progesterone receptor: progesterone-binding activates the acylglycerol lipase activity, mediating degradation of 1-arachidonoylglycerol (1AG) and 2-arachidonoylglycerol (2AG) to glycerol and arachidonic acid (AA). Also displays an ester hydrolase activity against acetyl ester, butanoate ester and hexadecanoate ester. Plays a key role in sperm capacitation in response to progesterone by mediating degradation of 2AG, an inhibitor of the sperm calcium channel CatSper, leading to calcium influx via CatSper and sperm activation. Involved in acrosomal reaction. May also play a role in smooth muscle cells migration. This chain is Monoacylglycerol lipase ABHD2 (Abhd2), found in Mus musculus (Mouse).